The following is a 303-amino-acid chain: Protoheme IX farnesyltransferase (303 aa).

A run of 9 helical transmembrane segments spans residues 25–45, 54–74, 104–124, 125–145, 151–171, 179–199, 227–247, 248–268, and 280–300; these read MGLV…AVVM, IPQI…ACAL, LLLL…LLNI, PSGV…SIWS, WNTV…WVAI, AIAL…ALAI, FIWL…GVVF, VVLA…TFKK, and FIYS…VSLL.

It belongs to the UbiA prenyltransferase family. Protoheme IX farnesyltransferase subfamily. In terms of assembly, interacts with CtaA.

The protein resides in the cell membrane. The enzyme catalyses heme b + (2E,6E)-farnesyl diphosphate + H2O = Fe(II)-heme o + diphosphate. It functions in the pathway porphyrin-containing compound metabolism; heme O biosynthesis; heme O from protoheme: step 1/1. Converts heme B (protoheme IX) to heme O by substitution of the vinyl group on carbon 2 of heme B porphyrin ring with a hydroxyethyl farnesyl side group. This chain is Protoheme IX farnesyltransferase, found in Staphylococcus aureus (strain bovine RF122 / ET3-1).